The chain runs to 559 residues: Glucose-6-phosphate isomerase (559 aa).

Glu352 (proton donor) is an active-site residue. Catalysis depends on residues His383 and Lys511.

Belongs to the GPI family.

Its subcellular location is the cytoplasm. The enzyme catalyses alpha-D-glucose 6-phosphate = beta-D-fructose 6-phosphate. It functions in the pathway carbohydrate biosynthesis; gluconeogenesis. The protein operates within carbohydrate degradation; glycolysis; D-glyceraldehyde 3-phosphate and glycerone phosphate from D-glucose: step 2/4. Functionally, catalyzes the reversible isomerization of glucose-6-phosphate to fructose-6-phosphate. This Chlorobaculum tepidum (strain ATCC 49652 / DSM 12025 / NBRC 103806 / TLS) (Chlorobium tepidum) protein is Glucose-6-phosphate isomerase.